We begin with the raw amino-acid sequence, 552 residues long: Putative transport protein APL_0966 (552 aa).

The next 5 helical transmembrane spans lie at 4–24 (IAIIVSLLSLVAVLGLWIGHI), 29–49 (VGLGIGGVLFGGIIISHCTHL), 65–85 (FGLILFVYSIGIQVGPGFFAS), 95–115 (GFAVMIVGLSGILVALIHKLF), and 161–181 (IAYPFGIIGILLSMWLIRIIF). 2 consecutive RCK C-terminal domains span residues 190 to 275 (QEFD…ILGE) and 277 to 360 (ADVS…IIGD). Transmembrane regions (helical) follow at residues 370 to 390 (MLPIFVGIGLGVLLGSLPLYI), 402 to 424 (AGGPLVVALILARIGSIGKLYWF), 438 to 458 (IVLFLSVVGLKAGANFLDTLL), 463 to 483 (LAWMGYGAIITFIPLIVTGFV), 492 to 512 (YLSLCGLLSGAMTDPPALAFA), and 529 to 549 (VYPLVMFLRIILPQLLAILLW).

Belongs to the AAE transporter (TC 2.A.81) family. YidE subfamily.

It is found in the cell membrane. This is Putative transport protein APL_0966 from Actinobacillus pleuropneumoniae serotype 5b (strain L20).